Reading from the N-terminus, the 290-residue chain is Alpha-1,2-colitosyltransferase (290 aa).

This sequence belongs to the glycosyltransferase 11 family. Does not require a metal cofactor. serves as cofactor.

It catalyses the reaction GDP-beta-L-colitose + beta-D-galactosyl-(1-&gt;3)-N-acetyl-D-glucosamine = alpha-L-colitosyl-(1-&gt;2)-beta-D-galactosyl-(1-&gt;3)-N-acetyl-D-glucosamine + GDP + H(+). Its pathway is bacterial outer membrane biogenesis; LPS O-antigen biosynthesis. Addition of metal ions dramatically decreases the activity to 0-40%. Functionally, involved in the biosynthesis of the lipopolysaccharide (LPS) O-antigen region. Catalyzes the transfer of colitose from GDP-colitose to the galactose residue of beta-Gal-(1-&gt;3)-GlcNAc (lacto-N-biose) via an alpha1,2-linkage. Is specific for beta-Gal-(1-&gt;3)-GlcNAc, but can use GDP-L-fucose as the sugar donor with almost the same efficiency as GDP-L-colitose. This chain is Alpha-1,2-colitosyltransferase, found in Escherichia coli.